A 308-amino-acid polypeptide reads, in one-letter code: D-alanine--D-alanine ligase (308 aa).

One can recognise an ATP-grasp domain in the interval 105-302 (KAIFRSLGLA…FPDLCERILD (198 aa)). 133–188 (DLPFGLPCVVKPAGEGSSVGVHLVNEAAELGPACRDAASHAGDVIVERYVKGTEVD) serves as a coordination point for ATP. Positions 256, 269, and 271 each coordinate Mg(2+).

It belongs to the D-alanine--D-alanine ligase family. It depends on Mg(2+) as a cofactor. Mn(2+) is required as a cofactor.

The protein localises to the cytoplasm. The catalysed reaction is 2 D-alanine + ATP = D-alanyl-D-alanine + ADP + phosphate + H(+). It participates in cell wall biogenesis; peptidoglycan biosynthesis. Functionally, cell wall formation. This is D-alanine--D-alanine ligase from Anaeromyxobacter sp. (strain K).